Consider the following 577-residue polypeptide: Hemagglutinin-neuraminidase (577 aa).

At M1–R22 the chain is on the intravirion side. A helical transmembrane segment spans residues L23–V45. At Y46–V571 the chain is on the virion surface side. N-linked (GlcNAc...) asparagine; by host glycans are attached at residues N119 and N144. The important for interaction with fusion/F protein stretch occupies residues G124–Y152. 3 disulfides stabilise this stretch: C172-C196, C186-C247, and C238-C251. Residues N234–S239 are involved in neuraminidase activity. 2 N-linked (GlcNAc...) asparagine; by host glycosylation sites follow: N341 and N433. 2 disulfide bridges follow: C344-C461 and C455-C465. N-linked (GlcNAc...) asparagine; by host glycans are attached at residues N481 and N538. The cysteines at positions 531 and 542 are disulfide-linked.

It belongs to the paramyxoviruses hemagglutinin-neuraminidase family. In terms of assembly, homotetramer; composed of disulfide-linked homodimers. Interacts with F protein trimer. Interacts with host CG-1B; this interaction inhibits viral adsorption and replication rather than internalization.

The protein localises to the virion membrane. It localises to the host cell membrane. The catalysed reaction is Hydrolysis of alpha-(2-&gt;3)-, alpha-(2-&gt;6)-, alpha-(2-&gt;8)- glycosidic linkages of terminal sialic acid residues in oligosaccharides, glycoproteins, glycolipids, colominic acid and synthetic substrates.. In terms of biological role, mediates the viral entry into the host cell together with fusion/F protein. Attaches the virus to sialic acid-containing cell receptors and thereby initiates infection. Binding of HN protein to the receptor induces a conformational change that allows the F protein to trigger virion/cell membranes fusion. Functionally, neuraminidase activity ensures the efficient spread of the virus by dissociating the mature virions from the neuraminic acid containing glycoproteins. This chain is Hemagglutinin-neuraminidase (HN), found in Gallus gallus (Chicken).